An 894-amino-acid polypeptide reads, in one-letter code: Nitrate reductase [NADPH] (894 aa).

Residues 1 to 79 (MAVKSQLGVT…PEDLKTPDHR (79 aa)) form a disordered region. Over residues 7-16 (LGVTYTTKTF) the composition is skewed to polar residues. Residues 69-79 (LPEDLKTPDHR) show a composition bias toward basic and acidic residues. Cys-169 provides a ligand contact to Mo-molybdopterin. One can recognise a Cytochrome b5 heme-binding domain in the interval 535 to 610 (VRIISLEELK…MPQYHIGTLN (76 aa)). The heme site is built by His-570 and His-593. Positions 638-749 (KYWSKAILET…KGPVGKFEYL (112 aa)) constitute an FAD-binding FR-type domain. Residues 692-695 (RAYT), 709-713 (LIKIY), 723-725 (KMT), Ser-773, and Thr-776 contribute to the FAD site.

It belongs to the nitrate reductase family. As to quaternary structure, homodimer. Requires FAD as cofactor. It depends on heme as a cofactor. Mo-molybdopterin is required as a cofactor.

It carries out the reaction nitrite + NADP(+) + H2O = nitrate + NADPH + H(+). Nitrate reductase is a key enzyme involved in the first step of nitrate assimilation in plants, fungi and bacteria. In Beauveria bassiana (White muscardine disease fungus), this protein is Nitrate reductase [NADPH] (NIA).